The sequence spans 124 residues: Keratin-associated protein 12-2 (124 aa).

20 tandem repeats follow at residues 10-13 (CQAA), 14-18 (CVPSS), 19-23 (CQPSC), 24-28 (STSSP), 33-38 (CFTSSL), 39-43 (CQPTC), 44-48 (STSST), 49-52 (CQAT), 53-57 (CVPVS), 58-62 (YRPAV), 63-67 (CLPVT), 68-72 (YKPTL), 73-77 (CVTPS), 78-82 (CQSSV), 83-87 (FLPVS), 88-92 (YRPAV), 98-102 (CQSSG), 103-107 (CYQPS), 108-112 (CPTLV), and 113-117 (YRPIS). A 20 X 5 AA approximate repeats region spans residues 10–117 (CQAACVPSSC…CPTLVYRPIS (108 aa)).

Belongs to the KRTAP type 12 family. As to quaternary structure, interacts with hair keratins.

Its function is as follows. In the hair cortex, hair keratin intermediate filaments are embedded in an interfilamentous matrix, consisting of hair keratin-associated proteins (KRTAP), which are essential for the formation of a rigid and resistant hair shaft through their extensive disulfide bond cross-linking with abundant cysteine residues of hair keratins. The matrix proteins include the high-sulfur and high-glycine-tyrosine keratins. The sequence is that of Keratin-associated protein 12-2 from Bos taurus (Bovine).